The sequence spans 161 residues: 2-C-methyl-D-erythritol 2,4-cyclodiphosphate synthase (161 aa).

2 residues coordinate a divalent metal cation: Asp13 and His15. Residues Asp13–His15 and His40–Ser41 each bind 4-CDP-2-C-methyl-D-erythritol 2-phosphate. His48 contacts a divalent metal cation. 4-CDP-2-C-methyl-D-erythritol 2-phosphate is bound at residue Asp62–Gly64.

It belongs to the IspF family. Homotrimer. It depends on a divalent metal cation as a cofactor.

It carries out the reaction 4-CDP-2-C-methyl-D-erythritol 2-phosphate = 2-C-methyl-D-erythritol 2,4-cyclic diphosphate + CMP. The protein operates within isoprenoid biosynthesis; isopentenyl diphosphate biosynthesis via DXP pathway; isopentenyl diphosphate from 1-deoxy-D-xylulose 5-phosphate: step 4/6. Functionally, involved in the biosynthesis of isopentenyl diphosphate (IPP) and dimethylallyl diphosphate (DMAPP), two major building blocks of isoprenoid compounds. Catalyzes the conversion of 4-diphosphocytidyl-2-C-methyl-D-erythritol 2-phosphate (CDP-ME2P) to 2-C-methyl-D-erythritol 2,4-cyclodiphosphate (ME-CPP) with a corresponding release of cytidine 5-monophosphate (CMP). This chain is 2-C-methyl-D-erythritol 2,4-cyclodiphosphate synthase, found in Deinococcus radiodurans (strain ATCC 13939 / DSM 20539 / JCM 16871 / CCUG 27074 / LMG 4051 / NBRC 15346 / NCIMB 9279 / VKM B-1422 / R1).